A 492-amino-acid chain; its full sequence is Bifunctional purine biosynthesis protein PurH (492 aa).

The MGS-like domain occupies 1–144 (MKKAILSVSN…KNFKHVITVV (144 aa)).

The protein belongs to the PurH family.

The catalysed reaction is (6R)-10-formyltetrahydrofolate + 5-amino-1-(5-phospho-beta-D-ribosyl)imidazole-4-carboxamide = 5-formamido-1-(5-phospho-D-ribosyl)imidazole-4-carboxamide + (6S)-5,6,7,8-tetrahydrofolate. It carries out the reaction IMP + H2O = 5-formamido-1-(5-phospho-D-ribosyl)imidazole-4-carboxamide. The protein operates within purine metabolism; IMP biosynthesis via de novo pathway; 5-formamido-1-(5-phospho-D-ribosyl)imidazole-4-carboxamide from 5-amino-1-(5-phospho-D-ribosyl)imidazole-4-carboxamide (10-formyl THF route): step 1/1. It functions in the pathway purine metabolism; IMP biosynthesis via de novo pathway; IMP from 5-formamido-1-(5-phospho-D-ribosyl)imidazole-4-carboxamide: step 1/1. This is Bifunctional purine biosynthesis protein PurH from Staphylococcus saprophyticus subsp. saprophyticus (strain ATCC 15305 / DSM 20229 / NCIMB 8711 / NCTC 7292 / S-41).